The following is a 451-amino-acid chain: Coproporphyrinogen III oxidase (451 aa).

FAD contacts are provided by residues 10–15, 36–37, 58–61, V242, W393, and 429–431; these read GGGISG, DP, GAEA, and IGV.

This sequence belongs to the protoporphyrinogen/coproporphyrinogen oxidase family. Coproporphyrinogen III oxidase subfamily. Requires FAD as cofactor.

The protein localises to the cytoplasm. The enzyme catalyses coproporphyrinogen III + 3 O2 = coproporphyrin III + 3 H2O2. Its pathway is porphyrin-containing compound metabolism; protoheme biosynthesis. Involved in coproporphyrin-dependent heme b biosynthesis. Catalyzes the oxidation of coproporphyrinogen III to coproporphyrin III. In Mycobacterium leprae (strain TN), this protein is Coproporphyrinogen III oxidase.